The sequence spans 316 residues: Probable porphobilinogen deaminase (316 aa).

Cys234 carries the post-translational modification S-(dipyrrolylmethanemethyl)cysteine.

This sequence belongs to the HMBS family. The cofactor is dipyrromethane.

The enzyme catalyses 4 porphobilinogen + H2O = hydroxymethylbilane + 4 NH4(+). The protein operates within porphyrin-containing compound metabolism; protoporphyrin-IX biosynthesis; coproporphyrinogen-III from 5-aminolevulinate: step 2/4. In terms of biological role, tetrapolymerization of the monopyrrole PBG into the hydroxymethylbilane pre-uroporphyrinogen in several discrete steps. This chain is Probable porphobilinogen deaminase, found in Methanosarcina barkeri (strain Fusaro / DSM 804).